An 869-amino-acid polypeptide reads, in one-letter code: Probable beta-glucosidase F (869 aa).

The first 19 residues, 1 to 19 (MRVLSAIALVASLVPSALS), serve as a signal peptide directing secretion. Asparagine 69, asparagine 77, and asparagine 261 each carry an N-linked (GlcNAc...) asparagine glycan. The active site involves aspartate 289. 5 N-linked (GlcNAc...) asparagine glycosylation sites follow: asparagine 332, asparagine 364, asparagine 399, asparagine 425, and asparagine 478. The tract at residues 678–698 (AYPPTRPPKGPTPTYPTTIPN) is disordered. Over residues 681–691 (PTRPPKGPTPT) the composition is skewed to pro residues. Asparagine 728 is a glycosylation site (N-linked (GlcNAc...) asparagine).

The protein belongs to the glycosyl hydrolase 3 family.

Its subcellular location is the secreted. It carries out the reaction Hydrolysis of terminal, non-reducing beta-D-glucosyl residues with release of beta-D-glucose.. The protein operates within glycan metabolism; cellulose degradation. Beta-glucosidases are one of a number of cellulolytic enzymes involved in the degradation of cellulosic biomass. Catalyzes the last step releasing glucose from the inhibitory cellobiose. This chain is Probable beta-glucosidase F (bglF), found in Neosartorya fischeri (strain ATCC 1020 / DSM 3700 / CBS 544.65 / FGSC A1164 / JCM 1740 / NRRL 181 / WB 181) (Aspergillus fischerianus).